Consider the following 87-residue polypeptide: Phosphoribosyl-ATP pyrophosphatase (87 aa).

It belongs to the PRA-PH family.

It is found in the cytoplasm. The enzyme catalyses 1-(5-phospho-beta-D-ribosyl)-ATP + H2O = 1-(5-phospho-beta-D-ribosyl)-5'-AMP + diphosphate + H(+). The protein operates within amino-acid biosynthesis; L-histidine biosynthesis; L-histidine from 5-phospho-alpha-D-ribose 1-diphosphate: step 2/9. This chain is Phosphoribosyl-ATP pyrophosphatase, found in Salinibacter ruber (strain DSM 13855 / M31).